Reading from the N-terminus, the 386-residue chain is Cytoplasmic 60S subunit biogenesis factor ZNF622 (386 aa).

Ala2 is modified (N-acetylalanine). 2 consecutive U1-type zinc fingers follow at residues 4-28 and 67-91; these read YTCI…TDWH and TYCT…SRRH. A disordered region spans residues 135–237; the sequence is AIKAQPSTSP…AEDAEAEESP (103 aa). Basic and acidic residues predominate over residues 165–176; that stretch reads GTPERDPTEKPP. Positions 194–235 are enriched in acidic residues; it reads EESEEEGEEDDEDWEDIDSDDGLECENPGVEEEDAEDAEAEE. Phosphoserine is present on Ser269.

Belongs to the REI1 family. In terms of assembly, homo- and heterodimer. Associates with pre-60S ribosomal particles. Interacts with MELK and MYBL2. Interacts with DNAJC21. In terms of processing, phosphorylated by MELK. The phosphorylation may redirect the protein to the nucleus. Ubiquitinated by HECTD1, leading to its degradation.

It localises to the cytoplasm. The protein resides in the nucleus. In terms of biological role, pre-60S-associated cytoplasmic factor involved in the cytoplasmic maturation of the 60S subunit. The chain is Cytoplasmic 60S subunit biogenesis factor ZNF622 (Znf622) from Rattus norvegicus (Rat).